Consider the following 280-residue polypeptide: Pantothenate synthetase (280 aa).

30–37 (MGYLHEGH) is a binding site for ATP. The Proton donor role is filled by His37. Gln61 provides a ligand contact to (R)-pantoate. Residue Gln61 participates in beta-alanine binding. Residue 147–150 (GKKD) coordinates ATP. Gln153 lines the (R)-pantoate pocket. Residues Val176 and 184 to 187 (MSSR) each bind ATP.

This sequence belongs to the pantothenate synthetase family. Homodimer.

The protein localises to the cytoplasm. It catalyses the reaction (R)-pantoate + beta-alanine + ATP = (R)-pantothenate + AMP + diphosphate + H(+). The protein operates within cofactor biosynthesis; (R)-pantothenate biosynthesis; (R)-pantothenate from (R)-pantoate and beta-alanine: step 1/1. In terms of biological role, catalyzes the condensation of pantoate with beta-alanine in an ATP-dependent reaction via a pantoyl-adenylate intermediate. The sequence is that of Pantothenate synthetase from Sulfurihydrogenibium sp. (strain YO3AOP1).